We begin with the raw amino-acid sequence, 1555 residues long: Regulating synaptic membrane exocytosis protein 2 (1555 aa).

The interval 1–35 (MSAPLGPRGRPAPTPAASQPPPQPEMPDLSHLTEE) is disordered. The segment covering 10 to 25 (RPAPTPAASQPPPQPE) has biased composition (pro residues). The region spanning 26–154 (MPDLSHLTEE…TKSGAWFYNS (129 aa)) is the RabBD domain. The FYVE-type zinc-finger motif lies at 86–142 (KGDAPTCGICHKTKFADGCGHNCSYCQTKFCARCGGRVSLRSNKVMWVCNLCRKQQE). Zn(2+) contacts are provided by Cys-92, Cys-95, Cys-108, Cys-111, Cys-116, Cys-119, Cys-134, and Cys-137. The span at 154-163 (SGSNTPQQPD) shows a compositional bias: polar residues. Residues 154 to 530 (SGSNTPQQPD…STPEYTSCDD (377 aa)) form a disordered region. Basic and acidic residues predominate over residues 170 to 185 (LRSEEAPQEKKAKLHE). A compositionally biased stretch (polar residues) spans 259–268 (YVPSDSTMPR). 4 stretches are compositionally biased toward basic and acidic residues: residues 287 to 298 (EPDHLNYRDSNR), 317 to 335 (RDEYERQRREEEYQARYRS), 351 to 370 (EQMRIHAEVSRARHERRHSD), and 379 to 403 (EDSRISLLRMDRPSRQRSVSERRAA). Residue Ser-369 is modified to Phosphoserine. Over residues 418 to 432 (AQGQSSYPQRTTNHS) the composition is skewed to polar residues. Residues 444–461 (DRPELRRADSLRKQHHLD) are compositionally biased toward basic and acidic residues. The segment covering 479 to 490 (RNDSLSSDQSES) has biased composition (polar residues). Basic residues predominate over residues 497–506 (RPHKSKKGGK). The PDZ domain occupies 590-676 (DGSVPRDSGA…EPQVELVVSR (87 aa)). Phosphothreonine is present on Thr-611. The disordered stretch occupies residues 682–716 (PRIPDSTHAQLESSSSSFESQKMDRPSISVTSPMS). Phosphoserine is present on residues Ser-713 and Ser-716. A C2 1 domain is found at 743 to 866 (FVPRVQIKLW…ALLDDEPHWY (124 aa)). Disordered regions lie at residues 877 to 913 (PLPHPSPYMPRRQLHGESPTRRLQRSKRISDSEVSDY), 935 to 1145 (STLS…KRNS), 1180 to 1207 (YRSGWDPHRGADTVSTKSSDSDVSDVSA), 1268 to 1288 (LEKNDGSQSDTAVGALGTSGK), and 1307 to 1332 (KSRSASQLSQTEGGGKKLRSTVQRST). Residues 935–953 (STLSVPEQVMSSNHCSPSG) are compositionally biased toward polar residues. Basic and acidic residues-rich tracts occupy residues 996-1014 (RMDRHRVMDDHYSSERDSH) and 1025-1071 (QTSE…ERAD). Low complexity predominate over residues 1092 to 1114 (ALSRSHPRTGSVQTSPSSTPVTG). The residue at position 1106 (Ser-1106) is a Phosphoserine. Basic and acidic residues-rich tracts occupy residues 1128–1141 (TLERMITEDMDSTR) and 1180–1190 (YRSGWDPHRGA). Ser-1200 and Ser-1276 each carry phosphoserine. Residues 1401 to 1519 (AMGDIQVGMM…ELSNMVIGWF (119 aa)) enclose the C2 2 domain. Phosphoserine is present on residues Ser-1540 and Ser-1543.

Heterodimer with PCLO. Part of a ternary complex involving PCLO and EPAC2. Interacts with RAB3C, RAB3D and RAB26. Binds RAB3A and RAB3B that have been activated by GTP-binding. Interacts with TSPOAP1 and RIMBP2. Interacts with PPFIA3 and PPFIA4. Interacts via its zinc finger with the first C2 domain of UNC13A. Forms a complex consisting of UNC13A, RIMS2 and RAB3A. As to expression, highly expressed in hippocampus, brain cortex, cerebellum and olfactory bulb. Detected at intermediate levels in midbrain, hindbrain and spinal cord, and at low levels in testis.

The protein resides in the cell membrane. It is found in the synapse. Its subcellular location is the presynaptic cell membrane. Rab effector involved in exocytosis. May act as scaffold protein. Plays a role in dendrite formation by melanocytes. In Rattus norvegicus (Rat), this protein is Regulating synaptic membrane exocytosis protein 2 (Rims2).